A 247-amino-acid polypeptide reads, in one-letter code: Coproheme decarboxylase (247 aa).

Residues Arg129, 143–147 (YPMDK), His170, Gln183, and Ser221 each bind Fe-coproporphyrin III. The active site involves Tyr143.

It belongs to the ChdC family. Type 1 subfamily. Fe-coproporphyrin III is required as a cofactor.

It carries out the reaction Fe-coproporphyrin III + 2 H2O2 + 2 H(+) = heme b + 2 CO2 + 4 H2O. The enzyme catalyses Fe-coproporphyrin III + H2O2 + H(+) = harderoheme III + CO2 + 2 H2O. It catalyses the reaction harderoheme III + H2O2 + H(+) = heme b + CO2 + 2 H2O. Its pathway is porphyrin-containing compound metabolism; protoheme biosynthesis. Its function is as follows. Involved in coproporphyrin-dependent heme b biosynthesis. Catalyzes the decarboxylation of Fe-coproporphyrin III (coproheme) to heme b (protoheme IX), the last step of the pathway. The reaction occurs in a stepwise manner with a three-propionate intermediate. The polypeptide is Coproheme decarboxylase (Bacillus cytotoxicus (strain DSM 22905 / CIP 110041 / 391-98 / NVH 391-98)).